The following is a 1128-amino-acid chain: Zinc finger protein 654 (1128 aa).

Positions 498–523 (GFDSLTDQSTGETDPDDVSGVQPKGH) are disordered. 5 C2H2-type zinc fingers span residues 572–594 (FACV…LKNH), 746–771 (FKCP…MTVH), 787–809 (GKCK…LNRH), 815–839 (YFCL…TKSH), and 844–868 (AQCS…EAQH). Positions 891-951 (DSNPNQEKDS…GNERSDDTVS (61 aa)) are disordered. Polar residues-rich tracts occupy residues 903-915 (NEKQ…VSTS) and 937-951 (SLVQ…DTVS). Phosphoserine occurs at positions 1123 and 1127.

This sequence belongs to the krueppel C2H2-type zinc-finger protein family.

Its subcellular location is the nucleus. Its function is as follows. May be involved in transcriptional regulation. The sequence is that of Zinc finger protein 654 from Homo sapiens (Human).